The following is a 120-amino-acid chain: UPF0344 protein BCAH187_A1308 (120 aa).

4 helical membrane passes run 6-26 (ITAW…YSAG), 32-52 (VHMG…WLYL), 64-84 (WYGL…MVLV), and 91-111 (ATGA…YLGL).

This sequence belongs to the UPF0344 family.

Its subcellular location is the cell membrane. The chain is UPF0344 protein BCAH187_A1308 from Bacillus cereus (strain AH187).